A 932-amino-acid chain; its full sequence is Alanine--tRNA ligase, mitochondrial (932 aa).

Residues 458-480 (SRLTWNTSSSSSDQTTQQTTQLP) are disordered. Residues 464–478 (TSSSSSDQTTQQTTQ) are compositionally biased toward low complexity. Positions 610, 614, 713, and 717 each coordinate Zn(2+).

Belongs to the class-II aminoacyl-tRNA synthetase family. Monomer. The cofactor is Zn(2+).

It localises to the mitochondrion. It catalyses the reaction tRNA(Ala) + L-alanine + ATP = L-alanyl-tRNA(Ala) + AMP + diphosphate. In terms of biological role, catalyzes the attachment of alanine to tRNA(Ala) in a two-step reaction: alanine is first activated by ATP to form Ala-AMP and then transferred to the acceptor end of tRNA(Ala). Also edits incorrectly charged tRNA(Ala) via its editing domain. The chain is Alanine--tRNA ligase, mitochondrial (malaS) from Dictyostelium discoideum (Social amoeba).